A 464-amino-acid chain; its full sequence is Argininosuccinate lyase (464 aa).

The protein belongs to the lyase 1 family. Argininosuccinate lyase subfamily.

It localises to the cytoplasm. It catalyses the reaction 2-(N(omega)-L-arginino)succinate = fumarate + L-arginine. Its pathway is amino-acid biosynthesis; L-arginine biosynthesis; L-arginine from L-ornithine and carbamoyl phosphate: step 3/3. This chain is Argininosuccinate lyase, found in Pseudomonas aeruginosa (strain ATCC 15692 / DSM 22644 / CIP 104116 / JCM 14847 / LMG 12228 / 1C / PRS 101 / PAO1).